Consider the following 335-residue polypeptide: DNA-directed RNA polymerase subunit alpha (335 aa).

The alpha N-terminal domain (alpha-NTD) stretch occupies residues 1 to 233 (MTRTANEFLT…QQIAIFVDLQ (233 aa)). The interval 247 to 335 (VDPILLRPVD…MDDRFAYRSR (89 aa)) is alpha C-terminal domain (alpha-CTD).

This sequence belongs to the RNA polymerase alpha chain family. As to quaternary structure, homodimer. The RNAP catalytic core consists of 2 alpha, 1 beta, 1 beta' and 1 omega subunit. When a sigma factor is associated with the core the holoenzyme is formed, which can initiate transcription.

It catalyses the reaction RNA(n) + a ribonucleoside 5'-triphosphate = RNA(n+1) + diphosphate. Its function is as follows. DNA-dependent RNA polymerase catalyzes the transcription of DNA into RNA using the four ribonucleoside triphosphates as substrates. In Acinetobacter baylyi (strain ATCC 33305 / BD413 / ADP1), this protein is DNA-directed RNA polymerase subunit alpha.